The chain runs to 353 residues: Phospho-N-acetylmuramoyl-pentapeptide-transferase (353 aa).

10 consecutive transmembrane segments (helical) span residues L24 to A44, T66 to A86, L88 to F108, F129 to D149, P160 to T180, G192 to A212, V229 to Y249, V256 to V276, I281 to V301, and K330 to L350.

The protein belongs to the glycosyltransferase 4 family. MraY subfamily. Mg(2+) is required as a cofactor.

The protein resides in the cell inner membrane. The catalysed reaction is UDP-N-acetyl-alpha-D-muramoyl-L-alanyl-gamma-D-glutamyl-meso-2,6-diaminopimeloyl-D-alanyl-D-alanine + di-trans,octa-cis-undecaprenyl phosphate = di-trans,octa-cis-undecaprenyl diphospho-N-acetyl-alpha-D-muramoyl-L-alanyl-D-glutamyl-meso-2,6-diaminopimeloyl-D-alanyl-D-alanine + UMP. Its pathway is cell wall biogenesis; peptidoglycan biosynthesis. Functionally, catalyzes the initial step of the lipid cycle reactions in the biosynthesis of the cell wall peptidoglycan: transfers peptidoglycan precursor phospho-MurNAc-pentapeptide from UDP-MurNAc-pentapeptide onto the lipid carrier undecaprenyl phosphate, yielding undecaprenyl-pyrophosphoryl-MurNAc-pentapeptide, known as lipid I. This chain is Phospho-N-acetylmuramoyl-pentapeptide-transferase, found in Helicobacter pylori (strain ATCC 700392 / 26695) (Campylobacter pylori).